The chain runs to 283 residues: Protein-S-isoprenylcysteine O-methyltransferase (283 aa).

Over 1 to 15 (MAAARRGSAGSEARL) the chain is Cytoplasmic. The helical transmembrane segment at 16–32 (SLATFLLGASVLALPLL) threads the bilayer. Residues 33 to 40 (TRAGLQGR) are Lumenal-facing. Residues 41–58 (TGLALYVAGLNALLLLLY) traverse the membrane as a helical segment. Residues 59–68 (RPPRYQIAIR) are Cytoplasmic-facing. A helical membrane pass occupies residues 69–86 (ACFLGFVFGCGVLLSFSQ). The Lumenal portion of the chain corresponds to 87–91 (SSWNH). Residues 92–111 (FGWYVCSLSLFHYSEYLVTA) traverse the membrane as a helical segment. The Cytoplasmic segment spans residues 112–130 (VNNPKSLSLDSFLLNHSLE). Residues 131–148 (YTVAALSSWIEFTLENIF) form a helical membrane-spanning segment. The Lumenal segment spans residues 149 to 153 (WPELK). Residues 154–173 (QITWLSATGLLMVVFGECLR) form a helical membrane-spanning segment. At 174 to 211 (KAAMFTAGSNFNHVVQSEKSDTHTLVTSGVYAWCRHPS) the chain is on the cytoplasmic side. Residues Q189, 196-199 (HTLV), Y204, and 209-212 (HPSY) each bind S-adenosyl-L-methionine. Residues 212–227 (YVGWFYWSIGTQVMLC) traverse the membrane as a helical segment. Residue N228 is a topological domain, lumenal. A helical transmembrane segment spans residues 229–243 (PICGVVYALTVWRFF). The Cytoplasmic portion of the chain corresponds to 244 to 283 (RDRTEEEEISLIHFFGEEYLDYKKRVPTGLPFIKGVKVEL). R246 is a binding site for substrate. Residue E250 participates in S-adenosyl-L-methionine binding.

This sequence belongs to the class VI-like SAM-binding methyltransferase superfamily. Isoprenylcysteine carboxyl methyltransferase family. As to expression, highly enriched in adult cerebellum, with a low level expression in other brain regions.

It localises to the endoplasmic reticulum membrane. The catalysed reaction is [protein]-C-terminal S-[(2E,6E)-farnesyl]-L-cysteine + S-adenosyl-L-methionine = [protein]-C-terminal S-[(2E,6E)-farnesyl]-L-cysteine methyl ester + S-adenosyl-L-homocysteine. Functionally, catalyzes the post-translational methylation of isoprenylated C-terminal cysteine residues. The chain is Protein-S-isoprenylcysteine O-methyltransferase (Icmt) from Mus musculus (Mouse).